Consider the following 351-residue polypeptide: Methylthioribose-1-phosphate isomerase (351 aa).

Residues 51–53 (RGA), Arg-94, and Gln-199 each bind substrate. Residue Asp-240 is the Proton donor of the active site. Substrate is bound at residue 250–251 (NK).

This sequence belongs to the EIF-2B alpha/beta/delta subunits family. MtnA subfamily. As to quaternary structure, homodimer.

The catalysed reaction is 5-(methylsulfanyl)-alpha-D-ribose 1-phosphate = 5-(methylsulfanyl)-D-ribulose 1-phosphate. Its pathway is amino-acid biosynthesis; L-methionine biosynthesis via salvage pathway; L-methionine from S-methyl-5-thio-alpha-D-ribose 1-phosphate: step 1/6. Its function is as follows. Catalyzes the interconversion of methylthioribose-1-phosphate (MTR-1-P) into methylthioribulose-1-phosphate (MTRu-1-P). This is Methylthioribose-1-phosphate isomerase from Bacillus cereus (strain ZK / E33L).